A 420-amino-acid polypeptide reads, in one-letter code: Bicoumarin synthase ktnC (420 aa).

Cysteine 362 lines the heme pocket.

Belongs to the cytochrome P450 family. Requires heme as cofactor.

The catalysed reaction is 2 7-demethylsiderin + NADPH + O2 = orlandin + NADP(+) + 2 H2O. It participates in secondary metabolite biosynthesis. In terms of biological role, non-reducing polyketide synthase; part of the gene cluster that mediates the biosynthesis of the bicoumarin kotanin. The non-reducing polyketide synthase ktnS first catalyzes the formation of the pentaketidic 4,7-dihydroxy-5-methylcoumarin from acetyl coenzyme A and 4 malonyl coenzyme A molecules. Further O-methylation by ktnB leads to the formation of 7-demethylsiderin. Then, an oxidative phenol coupling catalyzed by the cytochrome P450 monooxygenase ktnC forms the 8,8'-dimer P-orlandin via dimerization the monomeric precursor, 7-demethylsiderin. P-orlandin is subsequently O-methylated in a stepwise fashion to demethylkotanin and kotanin. This is Bicoumarin synthase ktnC from Aspergillus niger (strain ATCC MYA-4892 / CBS 513.88 / FGSC A1513).